The chain runs to 213 residues: 5-deoxy-D-ribulose 1-phosphate aldolase (213 aa).

Substrate contacts are provided by residues 28–29, 45–46, and 74–76; these read GN, SG, and SSE. The Proton donor/acceptor role is filled by Glu-76. Positions 76, 95, 97, and 157 each coordinate Mn(2+).

This sequence belongs to the aldolase class II family. In terms of assembly, forms homooligomers, possibly homotetramers. It depends on Mn(2+) as a cofactor.

It catalyses the reaction 5-deoxy-D-ribulose 1-phosphate = dihydroxyacetone phosphate + acetaldehyde. It functions in the pathway carbohydrate degradation. Functionally, catalyzes the cleavage of 5-deoxy-D-ribulose 1-phosphate to yield dihydroxyacetone phosphate (DHAP) and acetaldehyde, as part of a 5-deoxyribose salvage pathway that recycles this toxic radical SAM enzyme by-product to mainstream metabolites. Is also able to catalyze the reverse reaction, using several aldehydes as substrate, with acetaldehyde being the preferred substrate. The chain is 5-deoxy-D-ribulose 1-phosphate aldolase from Bacillus thuringiensis serovar kurstaki (strain ATCC 35866 / NRRL B-4488 / HD73).